The sequence spans 202 residues: MLTERQQELLDFLRVYQRQQGVMPSTRDIQLHFGFASQTAAMSHLKALERKGVIRRLAGKARAVVFPEVMERETVDIPIFGLIPAGFTADNPEHSDGNLTLDLRTMGLSPRSKPFALKVRGDSMTGAHIIQGDYVILEQRDPRPKDIVAALMDGETTLKRYLVDNGQPFLRAENPSYPDLIPARELMIQGVMVGLFRPYNGR.

Residues serine 123 and lysine 159 each act as for autocatalytic cleavage activity in the active site.

This sequence belongs to the peptidase S24 family. As to quaternary structure, homodimer.

The catalysed reaction is Hydrolysis of Ala-|-Gly bond in repressor LexA.. Binds the consensus sequence 5'-TGTTC-N(4)-GAACA-3'; some genes have a tandem consensus sequence, at high concentrations their binding is cooperative. Binds to the promoters of a number of genes, including dinB, imuA, lexA, recA, recQ, splB and uvrA. Represses a number of genes involved in the response to DNA damage (SOS response). In the presence of single-stranded DNA, RecA interacts with LexA causing an autocatalytic cleavage which disrupts the DNA-binding part of LexA, leading to derepression of the SOS regulon and eventually DNA repair. The chain is LexA repressor from Verrucomicrobium spinosum (strain ATCC 43997 / DSM 4136 / JCM 18804 / IFAM 1439).